We begin with the raw amino-acid sequence, 167 residues long: NAD(P)H-quinone oxidoreductase subunit I, chloroplastic (167 aa).

4Fe-4S ferredoxin-type domains lie at 55-84 and 95-124; these read GRIHFEFDKCIACEVCVRVCPIDLPVVDWK and LNYSIDFGICIFCGNCVEYCPTNCLSMTEE. 8 residues coordinate [4Fe-4S] cluster: C64, C67, C70, C74, C104, C107, C110, and C114.

It belongs to the complex I 23 kDa subunit family. NDH is composed of at least 16 different subunits, 5 of which are encoded in the nucleus. It depends on [4Fe-4S] cluster as a cofactor.

Its subcellular location is the plastid. The protein localises to the chloroplast thylakoid membrane. The catalysed reaction is a plastoquinone + NADH + (n+1) H(+)(in) = a plastoquinol + NAD(+) + n H(+)(out). It catalyses the reaction a plastoquinone + NADPH + (n+1) H(+)(in) = a plastoquinol + NADP(+) + n H(+)(out). In terms of biological role, NDH shuttles electrons from NAD(P)H:plastoquinone, via FMN and iron-sulfur (Fe-S) centers, to quinones in the photosynthetic chain and possibly in a chloroplast respiratory chain. The immediate electron acceptor for the enzyme in this species is believed to be plastoquinone. Couples the redox reaction to proton translocation, and thus conserves the redox energy in a proton gradient. This Panax ginseng (Korean ginseng) protein is NAD(P)H-quinone oxidoreductase subunit I, chloroplastic.